A 413-amino-acid chain; its full sequence is Hemolin (413 aa).

The signal sequence occupies residues 1 to 18; sequence MASKSLVVLSACIIIGSA. 4 consecutive Ig-like C2-type domains span residues 25–112, 122–211, 233–322, and 327–413; these read PVLK…RVIS, PAKT…GEVR, PQYL…LKVT, and PKYV…VQVN. Intrachain disulfides connect Cys-46–Cys-97, Cys-140–Cys-199, Cys-252–Cys-305, and Cys-349–Cys-395. The N-linked (GlcNAc...) asparagine glycan is linked to Asn-283.

The protein belongs to the hemolin family. As to expression, expressed in larval bristles.

It is found in the secreted. Its activity is regulated as follows. Increased activity in presence of phospholipids (low concentrations) and calcium ions. Inhibited by PMSF. Not affected by EDTA and E-64. In terms of biological role, bristle toxin involved in caterpillar defense by participating in hemorrhagic syndrome characterized by a consumptive coagulopathy. Exhibits procoagulant activity through selective factor X proteolytic activation. Activates factor X in a dose- and time-dependent manner but does not activate gamma-carboxyglutamic acid domainless factor X. Its activity does not depend on calcium ions. Also functions as a growth stimulator and an inhibitor of cellular death for endothelial cells. In vitro, increases proliferation of human umbilical vein endothelial cells (HUVEC) and inhibits the apoptosis induced by starvation. Also increases slightly the complement decay-accelerating factor (CD55), which protects cells from complement-mediated lysis. On the other hand, does not alter the release or expression of von Willebrand factor (VWF), tissue factor (F3), intercellular adhesion molecule-1 (ICAM1), interleukin-8 (CXCL8), and prostacyclin. Does not show fibrinolytic or fibrinogenolytic activities. In Lonomia obliqua (Moth), this protein is Hemolin.